A 482-amino-acid polypeptide reads, in one-letter code: MKFIVKPHPEIFVKSESVRKRFTKILESNIRIIIQNRTESVAVFNRRDHIEVSANSHQYYQQVLEILTTTPGIQQVLEVKQSGFKDLHDIYEQVLELSRERIENKTFVVRAKRRGKHDFTSIELERYVGGGLNQSVESASVKLHNPDITIKIEVVDDKLNQILAHHKGLGGFPLGTQEDLLSLISGGFDSGVSSYLHIKRGSKVHYCFFNLGGPAHEIGVKQVAHFLWNKYGSSAKVRFISVDFEPVVAEILEKVEDGQMGVVLKRMFMRAAGMVAEKFDIQALVTGEALGQVSSQTLTNLRHIDVVTDRLILRPLINWDKDEIIKVARDIGTEDFAKTMPEYCGVISKKPTVKAVKEKLEAEEANFNFDILEQVVRNARQMDIRDIAKESAQAAPEVEQVQAIEEHAVVLDIRSPDEEDDSPLEIDGVEVKHIPFYKLSTQFGDLDQSKTYLLYCARGVMSRLQALYLQEQGFNNVKVYRP.

Positions 61-165 (QQVLEILTTT…DDKLNQILAH (105 aa)) constitute a THUMP domain. Residues 183-184 (LI), Lys-265, Gly-287, and Gln-296 each bind ATP. Cys-344 and Cys-456 are joined by a disulfide. Positions 404-482 (IEEHAVVLDI…GFNNVKVYRP (79 aa)) constitute a Rhodanese domain. Cys-456 acts as the Cysteine persulfide intermediate in catalysis.

This sequence belongs to the ThiI family.

Its subcellular location is the cytoplasm. It carries out the reaction [ThiI sulfur-carrier protein]-S-sulfanyl-L-cysteine + a uridine in tRNA + 2 reduced [2Fe-2S]-[ferredoxin] + ATP + H(+) = [ThiI sulfur-carrier protein]-L-cysteine + a 4-thiouridine in tRNA + 2 oxidized [2Fe-2S]-[ferredoxin] + AMP + diphosphate. The catalysed reaction is [ThiS sulfur-carrier protein]-C-terminal Gly-Gly-AMP + S-sulfanyl-L-cysteinyl-[cysteine desulfurase] + AH2 = [ThiS sulfur-carrier protein]-C-terminal-Gly-aminoethanethioate + L-cysteinyl-[cysteine desulfurase] + A + AMP + 2 H(+). It participates in cofactor biosynthesis; thiamine diphosphate biosynthesis. Functionally, catalyzes the ATP-dependent transfer of a sulfur to tRNA to produce 4-thiouridine in position 8 of tRNAs, which functions as a near-UV photosensor. Also catalyzes the transfer of sulfur to the sulfur carrier protein ThiS, forming ThiS-thiocarboxylate. This is a step in the synthesis of thiazole, in the thiamine biosynthesis pathway. The sulfur is donated as persulfide by IscS. In Vibrio vulnificus (strain CMCP6), this protein is tRNA sulfurtransferase.